A 361-amino-acid chain; its full sequence is tRNA/tmRNA (uracil-C(5))-methyltransferase (361 aa).

S-adenosyl-L-methionine contacts are provided by glutamine 185, tyrosine 213, asparagine 218, glutamate 234, and aspartate 294. Cysteine 319 (nucleophile) is an active-site residue. The active-site Proton acceptor is glutamate 353.

It belongs to the class I-like SAM-binding methyltransferase superfamily. RNA M5U methyltransferase family. TrmA subfamily.

It carries out the reaction uridine(54) in tRNA + S-adenosyl-L-methionine = 5-methyluridine(54) in tRNA + S-adenosyl-L-homocysteine + H(+). It catalyses the reaction uridine(341) in tmRNA + S-adenosyl-L-methionine = 5-methyluridine(341) in tmRNA + S-adenosyl-L-homocysteine + H(+). Functionally, dual-specificity methyltransferase that catalyzes the formation of 5-methyluridine at position 54 (m5U54) in all tRNAs, and that of position 341 (m5U341) in tmRNA (transfer-mRNA). In Pseudomonas putida (strain ATCC 47054 / DSM 6125 / CFBP 8728 / NCIMB 11950 / KT2440), this protein is tRNA/tmRNA (uracil-C(5))-methyltransferase.